The following is a 478-amino-acid chain: Putative indole-3-acetic acid-amido synthetase GH3.10 (478 aa).

The protein belongs to the IAA-amido conjugating enzyme family.

In terms of biological role, may catalyze the synthesis of indole-3-acetic acid (IAA)-amino acid conjugates, providing a mechanism for the plant to cope with the presence of excess auxin. The protein is Putative indole-3-acetic acid-amido synthetase GH3.10 (GH3.10) of Oryza sativa subsp. japonica (Rice).